We begin with the raw amino-acid sequence, 731 residues long: Vezatin (731 aa).

2 helical membrane passes run 91–111 (LATP…LLVM) and 114–134 (TWWI…YLVI). The stretch at 382 to 414 (VRSLQLHLKALLNEVIILEDELEKLVCTKETQE) forms a coiled coil. 2 disordered regions span residues 570 to 671 (PVDP…DSLQ) and 710 to 731 (QTFG…IEEK). The span at 577-586 (ISNSEPSMNS) shows a compositional bias: polar residues. Positions 590-601 (KVSKNDTEEESS) are enriched in basic and acidic residues. The segment covering 658 to 671 (GLTTAPPTPRDSLQ) has biased composition (polar residues). Acidic residues predominate over residues 712–721 (FGDEEEEQII). Over residues 722-731 (EENKNKIEEK) the composition is skewed to basic and acidic residues.

Belongs to the vezatin family. In terms of assembly, interacts with USH2A (via the cytoplasmic region); the interaction associates VEZT with the USH2 complex at the stereocilia base. Interacts with myosin MYO7A and the cadherin-catenins complex.

The protein localises to the cell membrane. The protein resides in the cell projection. It localises to the stereocilium membrane. Its subcellular location is the cell junction. It is found in the adherens junction. The protein localises to the nucleus. The protein resides in the cytoplasmic vesicle. It localises to the secretory vesicle. Its subcellular location is the acrosome. Its function is as follows. Plays a pivotal role in the establishment of adherens junctions and their maintenance in adult life. Required for morphogenesis of the preimplantation embryo, and for the implantation process. The sequence is that of Vezatin (VEZT) from Pongo abelii (Sumatran orangutan).